The chain runs to 758 residues: 5-methyltetrahydropteroyltriglutamate--homocysteine methyltransferase (758 aa).

5-methyltetrahydropteroyltri-L-glutamate-binding positions include 17 to 20 and Lys-113; that span reads RELK. L-homocysteine-binding positions include 433–435 and Glu-486; that span reads IGS. Residues 433-435 and Glu-486 contribute to the L-methionine site; that span reads IGS. Residues 517–518 and Trp-563 each bind 5-methyltetrahydropteroyltri-L-glutamate; that span reads RC. Asp-601 lines the L-homocysteine pocket. Asp-601 is a binding site for L-methionine. A 5-methyltetrahydropteroyltri-L-glutamate-binding site is contributed by Glu-607. 3 residues coordinate Zn(2+): His-643, Cys-645, and Glu-667. The Proton donor role is filled by His-696. Cys-728 contacts Zn(2+).

This sequence belongs to the vitamin-B12 independent methionine synthase family. It depends on Zn(2+) as a cofactor.

The catalysed reaction is 5-methyltetrahydropteroyltri-L-glutamate + L-homocysteine = tetrahydropteroyltri-L-glutamate + L-methionine. It functions in the pathway amino-acid biosynthesis; L-methionine biosynthesis via de novo pathway; L-methionine from L-homocysteine (MetE route): step 1/1. Catalyzes the transfer of a methyl group from 5-methyltetrahydrofolate to homocysteine resulting in methionine formation. This chain is 5-methyltetrahydropteroyltriglutamate--homocysteine methyltransferase, found in Nitrosomonas europaea (strain ATCC 19718 / CIP 103999 / KCTC 2705 / NBRC 14298).